Reading from the N-terminus, the 403-residue chain is Eukaryotic initiation factor 4A (403 aa).

The tract at residues Met-1–Val-20 is disordered. The Q motif signature appears at Asp-30–Gln-58. Residues Ile-61–Ile-231 enclose the Helicase ATP-binding domain. Ala-74–Thr-81 is a binding site for ATP. A DEAD box motif is present at residues Asp-179–Asp-182. The 162-residue stretch at Gly-242–Ile-403 folds into the Helicase C-terminal domain.

Belongs to the DEAD box helicase family. eIF4A subfamily. In terms of assembly, eIF4F is a multi-subunit complex, the composition of which varies with external and internal environmental conditions. It is composed of at least eIF4A, eIF4E1 and eIF4G1. Interacts with tud and vas. Interacts (via multiple contacts) with bam; the interaction is direct.

It is found in the cytoplasm. The protein resides in the cytoplasmic ribonucleoprotein granule. It carries out the reaction ATP + H2O = ADP + phosphate + H(+). ATP-dependent RNA helicase which is a subunit of the eIF4F complex involved in cap recognition and is required for mRNA binding to ribosome. In the current model of translation initiation, eIF4A unwinds RNA secondary structures in the 5'-UTR of mRNAs which is necessary to allow efficient binding of the small ribosomal subunit, and subsequent scanning for the initiator codon. As a result, promotes cell proliferation and growth. Binds and antagonises the bam-bgcn complex; probably prevents bam mediated translational repression of shg/E-cadherin. Involved in germ cell formation. Involved in germline stem cell maintenance and proliferation; prevents differentiation. In Drosophila melanogaster (Fruit fly), this protein is Eukaryotic initiation factor 4A.